The chain runs to 115 residues: MNIIDRLEMEQMKKDIPAFKAGDTLRVHVKIVEGDKRRIQVFQGVCIKRHNKGLGSTFTVRKISDGMGVERVFPLHSPNIDKIEVMMVGRVRRAKLYYLRKLQGKAARIREKRSL.

It belongs to the bacterial ribosomal protein bL19 family.

In terms of biological role, this protein is located at the 30S-50S ribosomal subunit interface and may play a role in the structure and function of the aminoacyl-tRNA binding site. The chain is Large ribosomal subunit protein bL19 from Syntrophotalea carbinolica (strain DSM 2380 / NBRC 103641 / GraBd1) (Pelobacter carbinolicus).